The primary structure comprises 407 residues: Imidazolonepropionase (407 aa).

The Fe(3+) site is built by histidine 75 and histidine 77. Zn(2+) is bound by residues histidine 75 and histidine 77. Positions 84, 147, and 180 each coordinate 4-imidazolone-5-propanoate. Tyrosine 147 is an N-formimidoyl-L-glutamate binding site. Histidine 245 contributes to the Fe(3+) binding site. Histidine 245 contacts Zn(2+). Glutamine 248 serves as a coordination point for 4-imidazolone-5-propanoate. A Fe(3+)-binding site is contributed by aspartate 320. Aspartate 320 contacts Zn(2+). N-formimidoyl-L-glutamate contacts are provided by asparagine 322 and glycine 324. Serine 325 is a binding site for 4-imidazolone-5-propanoate.

It belongs to the metallo-dependent hydrolases superfamily. HutI family. Requires Zn(2+) as cofactor. Fe(3+) is required as a cofactor.

The protein localises to the cytoplasm. It catalyses the reaction 4-imidazolone-5-propanoate + H2O = N-formimidoyl-L-glutamate. Its pathway is amino-acid degradation; L-histidine degradation into L-glutamate; N-formimidoyl-L-glutamate from L-histidine: step 3/3. Catalyzes the hydrolytic cleavage of the carbon-nitrogen bond in imidazolone-5-propanoate to yield N-formimidoyl-L-glutamate. It is the third step in the universal histidine degradation pathway. The chain is Imidazolonepropionase from Pseudoalteromonas atlantica (strain T6c / ATCC BAA-1087).